The chain runs to 263 residues: Phosphate import ATP-binding protein PstB (263 aa).

Positions 17–258 (IDVRDLNFYY…PRRKETEDYI (242 aa)) constitute an ABC transporter domain. Residue 49–56 (GPSGCGKS) participates in ATP binding.

This sequence belongs to the ABC transporter superfamily. Phosphate importer (TC 3.A.1.7) family. In terms of assembly, the complex is composed of two ATP-binding proteins (PstB), two transmembrane proteins (PstC and PstA) and a solute-binding protein (PstS).

Its subcellular location is the cell inner membrane. The catalysed reaction is phosphate(out) + ATP + H2O = ADP + 2 phosphate(in) + H(+). Part of the ABC transporter complex PstSACB involved in phosphate import. Responsible for energy coupling to the transport system. The sequence is that of Phosphate import ATP-binding protein PstB from Ralstonia nicotianae (strain ATCC BAA-1114 / GMI1000) (Ralstonia solanacearum).